Reading from the N-terminus, the 312-residue chain is MARENSTFNSDFILLGIFNHSPTHTFLFFLVLAIFSVAFMGNSVMVLLIYLDTQLHTPMYLLLSQLSLMDLMLICTTVPKMAFNYLSGSKSISMAGCATQIFFYTSLLGSECFLLAVMAYDRYTAICHPLRYTNLMSPKICGLMTAFSWILGSTDGIIDVVATFSFSYCGSREIAHFFCDFPSLLILSCSDTSIFEKILFICCIVMIVFPVAIIIASYARVILAVIHMGSGEGRRKAFTTCSSHLLVVGMYYGAALFMYIRPTSDRSPTQDKMVSVFYTILTPMLNPLIYSLRNKEVTRAFMKILGKGKSGE.

Residues 1-25 are Extracellular-facing; the sequence is MARENSTFNSDFILLGIFNHSPTHT. Residue N5 is glycosylated (N-linked (GlcNAc...) asparagine). The helical transmembrane segment at 26–49 threads the bilayer; it reads FLFFLVLAIFSVAFMGNSVMVLLI. Residues 50-57 are Cytoplasmic-facing; that stretch reads YLDTQLHT. Residues 58–79 form a helical membrane-spanning segment; sequence PMYLLLSQLSLMDLMLICTTVP. The Extracellular portion of the chain corresponds to 80–100; it reads KMAFNYLSGSKSISMAGCATQ. C97 and C189 form a disulfide bridge. Residues 101–120 traverse the membrane as a helical segment; the sequence is IFFYTSLLGSECFLLAVMAY. Residues 121–139 are Cytoplasmic-facing; it reads DRYTAICHPLRYTNLMSPK. Residues 140-158 traverse the membrane as a helical segment; sequence ICGLMTAFSWILGSTDGII. Over 159-195 the chain is Extracellular; the sequence is DVVATFSFSYCGSREIAHFFCDFPSLLILSCSDTSIF. A helical transmembrane segment spans residues 196-219; the sequence is EKILFICCIVMIVFPVAIIIASYA. Over 220–236 the chain is Cytoplasmic; sequence RVILAVIHMGSGEGRRK. Residues 237 to 259 form a helical membrane-spanning segment; the sequence is AFTTCSSHLLVVGMYYGAALFMY. At 260 to 272 the chain is on the extracellular side; the sequence is IRPTSDRSPTQDK. The helical transmembrane segment at 273-292 threads the bilayer; that stretch reads MVSVFYTILTPMLNPLIYSL. Topologically, residues 293–312 are cytoplasmic; that stretch reads RNKEVTRAFMKILGKGKSGE.

Belongs to the G-protein coupled receptor 1 family.

The protein localises to the cell membrane. In terms of biological role, odorant receptor. This Homo sapiens (Human) protein is Olfactory receptor 2M3 (OR2M3).